Consider the following 348-residue polypeptide: Dihydroorotase (348 aa).

Positions 17 and 19 each coordinate Zn(2+). Substrate is bound by residues 19-21 and N45; that span reads HLR. K103, H140, and H178 together coordinate Zn(2+). Position 103 is an N6-carboxylysine (K103). H140 is a binding site for substrate. L223 contributes to the substrate binding site. D251 contacts Zn(2+). D251 is an active-site residue. Residues H255 and A267 each contribute to the substrate site.

The protein belongs to the metallo-dependent hydrolases superfamily. DHOase family. Class II DHOase subfamily. In terms of assembly, homodimer. The cofactor is Zn(2+).

The catalysed reaction is (S)-dihydroorotate + H2O = N-carbamoyl-L-aspartate + H(+). The protein operates within pyrimidine metabolism; UMP biosynthesis via de novo pathway; (S)-dihydroorotate from bicarbonate: step 3/3. Functionally, catalyzes the reversible cyclization of carbamoyl aspartate to dihydroorotate. This is Dihydroorotase from Serratia proteamaculans (strain 568).